The sequence spans 229 residues: NAD(P)H-quinone oxidoreductase subunit K, chloroplastic (229 aa).

Residues Cys43, Cys44, Cys108, and Cys139 each coordinate [4Fe-4S] cluster.

Belongs to the complex I 20 kDa subunit family. In terms of assembly, NDH is composed of at least 16 different subunits, 5 of which are encoded in the nucleus. [4Fe-4S] cluster is required as a cofactor.

Its subcellular location is the plastid. The protein localises to the chloroplast thylakoid membrane. The catalysed reaction is a plastoquinone + NADH + (n+1) H(+)(in) = a plastoquinol + NAD(+) + n H(+)(out). The enzyme catalyses a plastoquinone + NADPH + (n+1) H(+)(in) = a plastoquinol + NADP(+) + n H(+)(out). Functionally, NDH shuttles electrons from NAD(P)H:plastoquinone, via FMN and iron-sulfur (Fe-S) centers, to quinones in the photosynthetic chain and possibly in a chloroplast respiratory chain. The immediate electron acceptor for the enzyme in this species is believed to be plastoquinone. Couples the redox reaction to proton translocation, and thus conserves the redox energy in a proton gradient. The chain is NAD(P)H-quinone oxidoreductase subunit K, chloroplastic from Aethionema cordifolium (Lebanon stonecress).